Consider the following 585-residue polypeptide: Poly(A) RNA polymerase, mitochondrial (585 aa).

A mitochondrion-targeting transit peptide spans 1–37 (MAARGVGLLTRLPVCSQRRNRIPRSISRLLSCPGTIA). Residue lysine 90 is modified to N6-acetyllysine. ATP contacts are provided by residues 107-109 (YES) and 244-245 (GC). 2 residues coordinate Mg(2+): aspartate 246 and aspartate 248. One can recognise a PAP-associated domain in the interval 441–486 (ELLIKEFFEYFGNFAFNKNSINIRQGREQNKPDSSPLYIQNPFETS). The disordered stretch occupies residues 537-585 (PGSGHTSLSRKKKKKPMSEKVKGLLASIKSNSPDSSTDTSGKRTISTQA). Residues 564–585 (IKSNSPDSSTDTSGKRTISTQA) show a composition bias toward polar residues.

The protein belongs to the DNA polymerase type-B-like family. Homodimer. It depends on Mg(2+) as a cofactor. Requires Mn(2+) as cofactor.

The protein resides in the cytoplasm. Its subcellular location is the mitochondrion. It carries out the reaction RNA(n) + ATP = RNA(n)-3'-adenine ribonucleotide + diphosphate. In terms of biological role, polymerase that creates the 3' poly(A) tail of mitochondrial transcripts. Can use all four nucleotides, but has higher activity with ATP and UTP (in vitro). Plays a role in replication-dependent histone mRNA degradation. May be involved in the terminal uridylation of mature histone mRNAs before their degradation is initiated. Might be responsible for the creation of some UAA stop codons which are not encoded in mtDNA. This is Poly(A) RNA polymerase, mitochondrial (Mtpap) from Mus musculus (Mouse).